The sequence spans 273 residues: Phosphate import ATP-binding protein PstB (273 aa).

Residues 27–268 form the ABC transporter domain; sequence VTVRDLNFYY…PSDRRTQDYI (242 aa). An ATP-binding site is contributed by 59-66; sequence GPSGCGKS.

The protein belongs to the ABC transporter superfamily. Phosphate importer (TC 3.A.1.7) family. The complex is composed of two ATP-binding proteins (PstB), two transmembrane proteins (PstC and PstA) and a solute-binding protein (PstS).

Its subcellular location is the cell inner membrane. It carries out the reaction phosphate(out) + ATP + H2O = ADP + 2 phosphate(in) + H(+). Part of the ABC transporter complex PstSACB involved in phosphate import. Responsible for energy coupling to the transport system. The polypeptide is Phosphate import ATP-binding protein PstB (Rhodopseudomonas palustris (strain ATCC BAA-98 / CGA009)).